We begin with the raw amino-acid sequence, 577 residues long: Solute carrier family 22 member 16 (577 aa).

The helical transmembrane segment at 23–43 (LYFICAFQNISCGIHYLASVF) threads the bilayer. N57, N65, N68, and N108 each carry an N-linked (GlcNAc...) asparagine glycan. The next 5 membrane-spanning stretches (helical) occupy residues 152-172 (WLAM…SVTF), 183-203 (VVLW…AFAV), 214-234 (FLAM…MEFI), 244-264 (VHLH…GYLV), and 268-288 (WLYQ…CWVL). N345 and N352 each carry an N-linked (GlcNAc...) asparagine glycan. The next 6 membrane-spanning stretches (helical) occupy residues 359-379 (TLTV…FSLN), 389-409 (LNLF…CIAM), 416-436 (TVLA…MVIP), 441-461 (ILGV…FGLI), 476-496 (LAVG…PFSV), and 501-521 (IWIF…GVLT). The interval 543–577 (ESENESKSSKLLLTTNNSGLEKTEAITPRDSGLGE) is disordered. N-linked (GlcNAc...) asparagine glycosylation is found at N546 and N558. Residues 551 to 560 (SKLLLTTNNS) show a composition bias toward low complexity.

It belongs to the major facilitator (TC 2.A.1) superfamily. Organic cation transporter (TC 2.A.1.19) family. As to expression, expressed in testis and epididymis (at protein level). Expressed in endometrium (at protein level); highly expressed during the normal secretory phase, but expression is significantly reduced in the proliferative phase. Expressed at lower levels in adult tissues including bone marrow (at protein level). Expressed in hematopoietic cells, including CD34(+) leukocytes. Expressed in fetal liver (at protein level), brain, lung, kidney, heart, skeletal muscle, spleen and thymus. Expressed in leukemia cells. Abundantly expressed in ovarian cancer clear-cell adenocarcinoma.

It localises to the cell membrane. The catalysed reaction is (R)-carnitine(in) = (R)-carnitine(out). It catalyses the reaction spermidine(in) = spermidine(out). Its function is as follows. Facilitative organic cation transporter that mediates the transport of carnitine as well as the polyamine spermidine. Mediates the partially Na(+)-dependent bidirectional transport of carnitine. May mediate L-carnitine secretion from testis epididymal epithelium into the lumen which is involved in the maturation of spermatozoa. This chain is Solute carrier family 22 member 16, found in Homo sapiens (Human).